The following is a 111-amino-acid chain: Vacuolar ATPase assembly integral membrane protein VMA21 (111 aa).

Residues Met-1 to Asp-39 lie on the Cytoplasmic side of the membrane. A helical transmembrane segment spans residues Val-40 to Phe-60. Over Val-61–Tyr-73 the chain is Lumenal. The helical transmembrane segment at Ala-74–Met-94 threads the bilayer. Topologically, residues Asn-95–Arg-111 are cytoplasmic. Residues Lys-108–Arg-111 carry the Prevents secretion from ER motif.

It belongs to the VMA21 family.

It is found in the endoplasmic reticulum membrane. It localises to the endoplasmic reticulum-Golgi intermediate compartment membrane. Its subcellular location is the cytoplasmic vesicle. The protein localises to the COPII-coated vesicle membrane. Functionally, required for the assembly of the V0 complex of the vacuolar ATPase (V-ATPase) in the endoplasmic reticulum. The polypeptide is Vacuolar ATPase assembly integral membrane protein VMA21 (Pyricularia oryzae (strain 70-15 / ATCC MYA-4617 / FGSC 8958) (Rice blast fungus)).